The following is a 191-amino-acid chain: Peptidyl-tRNA hydrolase (191 aa).

TRNA is bound at residue Y15. The active-site Proton acceptor is H20. TRNA-binding residues include F66, N68, and N114.

The protein belongs to the PTH family. As to quaternary structure, monomer.

The protein localises to the cytoplasm. The catalysed reaction is an N-acyl-L-alpha-aminoacyl-tRNA + H2O = an N-acyl-L-amino acid + a tRNA + H(+). Hydrolyzes ribosome-free peptidyl-tRNAs (with 1 or more amino acids incorporated), which drop off the ribosome during protein synthesis, or as a result of ribosome stalling. In terms of biological role, catalyzes the release of premature peptidyl moieties from peptidyl-tRNA molecules trapped in stalled 50S ribosomal subunits, and thus maintains levels of free tRNAs and 50S ribosomes. This chain is Peptidyl-tRNA hydrolase, found in Streptococcus agalactiae serotype III (strain NEM316).